Reading from the N-terminus, the 394-residue chain is Elongation factor Tu (394 aa).

The tr-type G domain maps to 10–204 (KPHINVGTIG…FLDSYIPEPK (195 aa)). The interval 19–26 (GHVDHGKT) is G1. Residue 19-26 (GHVDHGKT) coordinates GTP. Threonine 26 serves as a coordination point for Mg(2+). A G2 region spans residues 60–64 (GITIN). The tract at residues 81-84 (DCPG) is G3. Residues 81-85 (DCPGH) and 136-139 (NKCD) each bind GTP. Residues 136–139 (NKCD) form a G4 region. Residues 174-176 (SAL) form a G5 region.

The protein belongs to the TRAFAC class translation factor GTPase superfamily. Classic translation factor GTPase family. EF-Tu/EF-1A subfamily. Monomer.

It is found in the cytoplasm. It carries out the reaction GTP + H2O = GDP + phosphate + H(+). In terms of biological role, GTP hydrolase that promotes the GTP-dependent binding of aminoacyl-tRNA to the A-site of ribosomes during protein biosynthesis. This is Elongation factor Tu from Buchnera aphidicola subsp. Acyrthosiphon pisum (strain 5A).